Consider the following 302-residue polypeptide: Ethylmalonyl-CoA decarboxylase (302 aa).

It belongs to the enoyl-CoA hydratase/isomerase family.

The protein resides in the cytoplasm. It is found in the cytosol. The enzyme catalyses (2S)-ethylmalonyl-CoA + H(+) = butanoyl-CoA + CO2. The catalysed reaction is (S)-methylmalonyl-CoA + H(+) = propanoyl-CoA + CO2. It catalyses the reaction (2R)-ethylmalonyl-CoA + H(+) = butanoyl-CoA + CO2. Decarboxylates ethylmalonyl-CoA, a potentially toxic metabolite, to form butyryl-CoA, suggesting it might be involved in metabolite proofreading. Acts preferentially on (S)-ethylmalonyl-CoA but also has some activity on the (R)-isomer. Also has methylmalonyl-CoA decarboxylase activity at lower level. This Danio rerio (Zebrafish) protein is Ethylmalonyl-CoA decarboxylase (echdc1).